A 227-amino-acid chain; its full sequence is Orotate phosphoribosyltransferase (227 aa).

Lys34 is a binding site for 5-phospho-alpha-D-ribose 1-diphosphate. 42–43 (FF) lines the orotate pocket. 5-phospho-alpha-D-ribose 1-diphosphate is bound by residues 80–81 (YK), Arg106, Lys107, Lys110, His112, and 131–139 (DDVISAGTS). Orotate-binding residues include Ser135 and Arg163.

It belongs to the purine/pyrimidine phosphoribosyltransferase family. PyrE subfamily. As to quaternary structure, homodimer. Mg(2+) is required as a cofactor.

It catalyses the reaction orotidine 5'-phosphate + diphosphate = orotate + 5-phospho-alpha-D-ribose 1-diphosphate. The protein operates within pyrimidine metabolism; UMP biosynthesis via de novo pathway; UMP from orotate: step 1/2. Catalyzes the transfer of a ribosyl phosphate group from 5-phosphoribose 1-diphosphate to orotate, leading to the formation of orotidine monophosphate (OMP). The protein is Orotate phosphoribosyltransferase of Cupriavidus necator (strain ATCC 17699 / DSM 428 / KCTC 22496 / NCIMB 10442 / H16 / Stanier 337) (Ralstonia eutropha).